The chain runs to 439 residues: tRNA(Ile)-lysidine synthase (439 aa).

ATP is bound at residue Ser25–Ser30.

It belongs to the tRNA(Ile)-lysidine synthase family.

Its subcellular location is the cytoplasm. The catalysed reaction is cytidine(34) in tRNA(Ile2) + L-lysine + ATP = lysidine(34) in tRNA(Ile2) + AMP + diphosphate + H(+). Ligates lysine onto the cytidine present at position 34 of the AUA codon-specific tRNA(Ile) that contains the anticodon CAU, in an ATP-dependent manner. Cytidine is converted to lysidine, thus changing the amino acid specificity of the tRNA from methionine to isoleucine. This chain is tRNA(Ile)-lysidine synthase, found in Edwardsiella ictaluri (strain 93-146).